We begin with the raw amino-acid sequence, 415 residues long: MTQNSAENPFPVRAVAIRVAGWIDKLGAVWVEGQLAQITMRPDAKTVFMVLRDPAADMSLTVTCSRDLVLSAPVKLAEGVQVVVCGKPSFYTGRGTFSLRLSEIRAVGIGELLARIDRLRRLLDAEGLFDPRLKRPIPYLPNMIGLITGRASAAERDVTTVASARWPAARFAVRNVAVQGPNAVGQIVEALRELDRDPDVDVIVLARGGGSVEDLLPFSDETLCRAIAACRTPVVSAVGHEPDNPLCDLVVDLRAATPTDAAKKVVPDTAAEQRLIDDLRRRSAQALRNWVSREQRAVAQLRSRPVLADPMTMVSVRAEEVHRARSTLRRNLTLMVAAETERIGHLAARLATLGPAATLARGYAIVQTVAQTGPEGGSEPQVLRSVHDAPEGTKLRVRVADGALAAVSEGQTNGL.

This sequence belongs to the XseA family. In terms of assembly, heterooligomer composed of large and small subunits.

The protein resides in the cytoplasm. It catalyses the reaction Exonucleolytic cleavage in either 5'- to 3'- or 3'- to 5'-direction to yield nucleoside 5'-phosphates.. Its function is as follows. Bidirectionally degrades single-stranded DNA into large acid-insoluble oligonucleotides, which are then degraded further into small acid-soluble oligonucleotides. The polypeptide is Exodeoxyribonuclease 7 large subunit (Mycobacterium bovis (strain ATCC BAA-935 / AF2122/97)).